Reading from the N-terminus, the 154-residue chain is Myoglobin (154 aa).

A Globin domain is found at 2 to 148 (GLSDGEWQLV…FRNDMAAKYK (147 aa)). Ser-4 carries the phosphoserine modification. Residue His-65 coordinates nitrite. O2 is bound at residue His-65. Thr-68 carries the phosphothreonine modification. A heme b-binding site is contributed by His-94.

Belongs to the globin family. In terms of assembly, monomeric.

It is found in the cytoplasm. The protein localises to the sarcoplasm. The catalysed reaction is Fe(III)-heme b-[protein] + nitric oxide + H2O = Fe(II)-heme b-[protein] + nitrite + 2 H(+). It carries out the reaction H2O2 + AH2 = A + 2 H2O. Its function is as follows. Monomeric heme protein which primary function is to store oxygen and facilitate its diffusion within muscle tissues. Reversibly binds oxygen through a pentacoordinated heme iron and enables its timely and efficient release as needed during periods of heightened demand. Depending on the oxidative conditions of tissues and cells, and in addition to its ability to bind oxygen, it also has a nitrite reductase activity whereby it regulates the production of bioactive nitric oxide. Under stress conditions, like hypoxia and anoxia, it also protects cells against reactive oxygen species thanks to its pseudoperoxidase activity. The polypeptide is Myoglobin (MB) (Didelphis virginiana (North American opossum)).